Reading from the N-terminus, the 374-residue chain is Carnitine monooxygenase oxygenase subunit (374 aa).

The region spanning 47–155 (WICVAHSSEL…LEEYAGFVFI (109 aa)) is the Rieske domain. Residues C89, H91, C109, and H112 each contribute to the [2Fe-2S] cluster site. Fe cation-binding residues include H211, H216, and D325.

It belongs to the bacterial ring-hydroxylating dioxygenase alpha subunit family. CntA subfamily. In terms of assembly, composed of an oxygenase subunit and a reductase subunit. The cofactor is [2Fe-2S] cluster. Fe cation serves as cofactor.

It catalyses the reaction (R)-carnitine + NADH + O2 + H(+) = (3R)-3-hydroxy-4-oxobutanoate + trimethylamine + NAD(+) + H2O. It carries out the reaction (R)-carnitine + NADPH + O2 + H(+) = (3R)-3-hydroxy-4-oxobutanoate + trimethylamine + NADP(+) + H2O. It participates in amine and polyamine metabolism; carnitine metabolism. Converts carnitine to trimethylamine and malic semialdehyde. This is Carnitine monooxygenase oxygenase subunit (yeaW) from Escherichia coli O157:H7.